The following is a 469-amino-acid chain: Ribonuclease Y (469 aa).

The chain crosses the membrane as a helical span at residues 6–26 (VTLILVGVIIFLFISLFFYVI). One can recognise a KH domain in the interval 149 to 209 (FSFTIKLENE…IRREKAKRTM (61 aa)). Positions 276–369 (VLLHCVEAAV…VKVVDKLSAS (94 aa)) constitute an HD domain.

The protein belongs to the RNase Y family.

The protein localises to the cell membrane. Functionally, endoribonuclease that initiates mRNA decay. The protein is Ribonuclease Y of Malacoplasma penetrans (strain HF-2) (Mycoplasma penetrans).